A 525-amino-acid chain; its full sequence is MSDPVIKRALVSVSDKTGIVEFCRELSGMGVEIFSTGGTLKSLQDSGVSASSISTITGFPEIMDGRVKTLHPKIHGGLLAVRENPEHVKQATENGISFIDLVVVNLYPFEATVARPDVTFEDAIENIDIGGPSMLRSAAKNNESVTVVTDSADYALVLQEMREHNGATKRTTRLTLALKVFELTSRYDRAIASYLAGAVAGEQQGAASKMTVTLERELDMRYGENPHQSAGLYRLTDENGTRSFGDFFEKLHGKELSYNNMLDIAAAVSLIEEFRGEEPTVVIVKHTNPCGVAQAPTLAEAYRRAFSTDTQAPFGGIISFNRPLDMEAAKAVNEIFTEILIAPAFEDGVLEMLMKKKDRRLVLQTNALPKGGWEFKSTPFGMLVQERDSKIVAKEDLTVVTKRQPTEEEIADLMFAWKICKHIKSNTILYVKNRQTYGVGAGQMSRVDSSKIARWKASEVSLDLHGSVVASDAFFPFADGLLAAAEAGVTAVIQPGGSIRDNEVIEAADANNLAMVFTGMRHFKH.

An MGS-like domain is found at Met-1–Thr-149.

This sequence belongs to the PurH family.

The catalysed reaction is (6R)-10-formyltetrahydrofolate + 5-amino-1-(5-phospho-beta-D-ribosyl)imidazole-4-carboxamide = 5-formamido-1-(5-phospho-D-ribosyl)imidazole-4-carboxamide + (6S)-5,6,7,8-tetrahydrofolate. It catalyses the reaction IMP + H2O = 5-formamido-1-(5-phospho-D-ribosyl)imidazole-4-carboxamide. Its pathway is purine metabolism; IMP biosynthesis via de novo pathway; 5-formamido-1-(5-phospho-D-ribosyl)imidazole-4-carboxamide from 5-amino-1-(5-phospho-D-ribosyl)imidazole-4-carboxamide (10-formyl THF route): step 1/1. It functions in the pathway purine metabolism; IMP biosynthesis via de novo pathway; IMP from 5-formamido-1-(5-phospho-D-ribosyl)imidazole-4-carboxamide: step 1/1. The protein is Bifunctional purine biosynthesis protein PurH of Pelodictyon phaeoclathratiforme (strain DSM 5477 / BU-1).